The following is a 1340-amino-acid chain: Iron-sulfur cluster assembly protein SufD (1340 aa).

Low complexity predominate over residues asparagine 477–lysine 487. Disordered regions lie at residues asparagine 477 to serine 498, histidine 723 to asparagine 743, asparagine 765 to valine 794, glutamate 835 to lysine 865, and asparagine 992 to glutamine 1055. Basic and acidic residues predominate over residues histidine 723–asparagine 734. A compositionally biased stretch (polar residues) spans asparagine 782–valine 794. The segment covering aspartate 1022 to isoleucine 1037 has biased composition (polar residues).

The protein belongs to the iron-sulfur cluster assembly SufBD family. In terms of assembly, component of a complex composed of SufB, SufC and SufD in a stoichiometric ratio of 1:2:1. Interacts with SufB. Interacts with SufC; the interaction enhances the ATPase activity of SufC.

It is found in the plastid. The protein resides in the apicoplast. The protein operates within cofactor biosynthesis; iron-sulfur cluster biosynthesis. Participates in the sulfur mobilization (SUF) pathway for iron-sulfur (Fe-S) cluster biogenesis. As part of a complex consisting of SufB-SufC(2)-SufD, involved in assembly of [4Fe-4S] clusters. Enhances the ATPase activity of SufC. The protein is Iron-sulfur cluster assembly protein SufD of Plasmodium berghei (strain Anka).